A 129-amino-acid polypeptide reads, in one-letter code: Small ribosomal subunit protein uS8 (129 aa).

The protein belongs to the universal ribosomal protein uS8 family. In terms of assembly, part of the 30S ribosomal subunit. Contacts proteins S5 and S12.

One of the primary rRNA binding proteins, it binds directly to 16S rRNA central domain where it helps coordinate assembly of the platform of the 30S subunit. This chain is Small ribosomal subunit protein uS8, found in Legionella pneumophila (strain Corby).